A 343-amino-acid polypeptide reads, in one-letter code: DNA repair and recombination protein RadA (343 aa).

An ATP-binding site is contributed by 107 to 114 (GEFGAGKS).

This sequence belongs to the eukaryotic RecA-like protein family.

In terms of biological role, involved in DNA repair and in homologous recombination. Binds and assemble on single-stranded DNA to form a nucleoprotein filament. Hydrolyzes ATP in a ssDNA-dependent manner and promotes DNA strand exchange between homologous DNA molecules. This is DNA repair and recombination protein RadA from Halobacterium salinarum (strain ATCC 29341 / DSM 671 / R1).